Reading from the N-terminus, the 287-residue chain is MSTASQHLYKRRRLINAAAITISCIAALFGLFFLIWILWTLISKGLPGIDLDLFTKITPPPMQKGGLANAFLGSAIMCLLAIVIGTPVGIAAGTWLAEYGNTSQTSTVVRFVNDILLSAPSIVLGLFVYTLYVMHTGGHFSAFSGALALVFIVLPIVVRTTDEMLRLVPGQMREAALSLGIPQWKMITQVLYRSASAGILTGILLALARISGETAPLLFTAFGNQYWSSNIFQPIASLPLVMNQFASSPYKSWQLLAWSGALVLTVFVLLVSLGARALLLRNKIPNT.

6 helical membrane passes run 22–42, 70–90, 115–135, 138–158, 199–219, and 255–275; these read ISCI…WTLI, AFLG…PVGI, ILLS…YVMH, GHFS…PIVV, ILTG…PLLF, and LLAW…SLGA. The region spanning 71–279 is the ABC transmembrane type-1 domain; it reads FLGSAIMCLL…LVSLGARALL (209 aa).

It belongs to the binding-protein-dependent transport system permease family. CysTW subfamily.

The protein localises to the cell inner membrane. Part of a binding-protein-dependent transport system for phosphate; probably responsible for the translocation of the substrate across the membrane. In Xylella fastidiosa (strain Temecula1 / ATCC 700964), this protein is Phosphate transport system permease protein PstA (pstA).